Here is a 564-residue protein sequence, read N- to C-terminus: Solute carrier family 22 member 21 (564 aa).

The Cytoplasmic portion of the chain corresponds to 1-20 (MLDYDEVTAFLGEWGTFQRL). Residues 21–41 (IFFLLSASIIPNGFTGLSAVF) traverse the membrane as a helical segment. At 42–142 (LTAIPEHRCR…DLVCKDDWKA (101 aa)) the chain is on the extracellular side. Asparagine 57, asparagine 64, and asparagine 91 each carry an N-linked (GlcNAc...) asparagine glycan. Residues 143–163 (PLTTSFFYVGVLLGSFISGQL) form a helical membrane-spanning segment. Over 164 to 172 (SDRFGRKNI) the chain is Cytoplasmic. Residues 173–193 (LFLTMAMHTGFSFIQVFSVNF) traverse the membrane as a helical segment. The Extracellular segment spans residues 194 to 197 (EMFT). A helical membrane pass occupies residues 198–218 (LLYTLVGMGHISNYVAAFVLG). 218 to 225 (GTEMLSKS) provides a ligand contact to ATP. At 219-232 (TEMLSKSVRIIFAT) the chain is on the cytoplasmic side. A helical transmembrane segment spans residues 233–253 (LGVCIFFAFGFMVLPLFAYFI). The Extracellular segment spans residues 254–257 (REWR). A helical membrane pass occupies residues 258–278 (RLLLAITLPGVLCGALWWFIP). Residues 279–344 (ESPRWLISQG…YDLVRTPNIR (66 aa)) lie on the Cytoplasmic side of the membrane. Residues 345–365 (ILTIMSIILWLTISVGYFGLS) traverse the membrane as a helical segment. Over 366 to 376 (LDTPNLNGNIY) the chain is Extracellular. Residues 377 to 397 (VNCFLLAAVEVPAYVLAWLLL) traverse the membrane as a helical segment. Over 398-409 (QHVSRRYSMAGS) the chain is Cytoplasmic. Residues 410 to 430 (LFLGGSVLLLVQLVPSDLHYL) form a helical membrane-spanning segment. The Extracellular portion of the chain corresponds to 431-433 (STT). The helical transmembrane segment at 434-454 (LVMVGKFGITSAYSMVYVYTA) threads the bilayer. At 455 to 465 (ELYPTVVRNMG) the chain is on the cytoplasmic side. The helical transmembrane segment at 466–486 (VGVSSTASRLGSILSPYFVYL) threads the bilayer. Residues 487-491 (GAYDR) lie on the Extracellular side of the membrane. A helical membrane pass occupies residues 492 to 512 (RLPYILMGSLTILTAIITLFF). At 513–564 (PESSGVSLPETIDEMQKVKKLKQRQSLSKKGSPKESKGNVSRTSRTSEPKGF) the chain is on the cytoplasmic side. The interval 532 to 564 (KLKQRQSLSKKGSPKESKGNVSRTSRTSEPKGF) is disordered.

Belongs to the major facilitator (TC 2.A.1) superfamily. Organic cation transporter (TC 2.A.1.19) family. Predominantly expressed in testis.

It is found in the peroxisome membrane. Functionally, sodium-ion independent, medium affinity carnitine transporter. Also transports organic cations such as tetraethylammonium (TEA) without the involvement of sodium. Relative uptake activity ratio of carnitine to TEA is 746. The protein is Solute carrier family 22 member 21 (Slc22a21) of Mus musculus (Mouse).